Reading from the N-terminus, the 397-residue chain is Beta sliding clamp (397 aa).

The protein belongs to the beta sliding clamp family. Forms a ring-shaped head-to-tail homodimer around DNA which binds and tethers DNA polymerases and other proteins to the DNA. The DNA replisome complex has a single clamp-loading complex (3 tau and 1 each of delta, delta', psi and chi subunits) which binds 3 Pol III cores (1 core on the leading strand and 2 on the lagging strand) each with a beta sliding clamp dimer. Additional proteins in the replisome are other copies of gamma, psi and chi, Ssb, DNA helicase and RNA primase.

It is found in the cytoplasm. Its function is as follows. Confers DNA tethering and processivity to DNA polymerases and other proteins. Acts as a clamp, forming a ring around DNA (a reaction catalyzed by the clamp-loading complex) which diffuses in an ATP-independent manner freely and bidirectionally along dsDNA. Initially characterized for its ability to contact the catalytic subunit of DNA polymerase III (Pol III), a complex, multichain enzyme responsible for most of the replicative synthesis in bacteria; Pol III exhibits 3'-5' exonuclease proofreading activity. The beta chain is required for initiation of replication as well as for processivity of DNA replication. This Mycolicibacterium smegmatis (strain ATCC 700084 / mc(2)155) (Mycobacterium smegmatis) protein is Beta sliding clamp (dnaN).